We begin with the raw amino-acid sequence, 282 residues long: Elongation factor Ts (282 aa).

The involved in Mg(2+) ion dislocation from EF-Tu stretch occupies residues 79–82 (TDFV).

It belongs to the EF-Ts family.

It is found in the cytoplasm. Associates with the EF-Tu.GDP complex and induces the exchange of GDP to GTP. It remains bound to the aminoacyl-tRNA.EF-Tu.GTP complex up to the GTP hydrolysis stage on the ribosome. This is Elongation factor Ts from Colwellia psychrerythraea (strain 34H / ATCC BAA-681) (Vibrio psychroerythus).